Here is a 466-residue protein sequence, read N- to C-terminus: GTPase Der (466 aa).

EngA-type G domains lie at 30–193 (PVVA…PEVS) and 203–376 (RRVA…ASWD). GTP contacts are provided by residues 36–43 (GRPNVGKS), 83–87 (DTGGW), 145–148 (NKVD), 209–216 (GKPNVGKS), 256–260 (DTAGL), and 321–324 (NKWD). The KH-like domain maps to 377 to 459 (TRIATGPLNS…PIRINVRVRE (83 aa)).

Belongs to the TRAFAC class TrmE-Era-EngA-EngB-Septin-like GTPase superfamily. EngA (Der) GTPase family. In terms of assembly, associates with the 50S ribosomal subunit.

In terms of biological role, GTPase that plays an essential role in the late steps of ribosome biogenesis. The sequence is that of GTPase Der from Mycolicibacterium paratuberculosis (strain ATCC BAA-968 / K-10) (Mycobacterium paratuberculosis).